We begin with the raw amino-acid sequence, 376 residues long: Chaperone protein DnaJ (376 aa).

The J domain occupies 5 to 70; the sequence is DYYEVLGVAK…QKRAAYDQYG (66 aa). The segment at 136 to 214 adopts a CR-type zinc-finger fold; that stretch reads GYDTQIRVPS…CHGSGKVKET (79 aa). Positions 149, 152, 166, 169, 188, 191, 202, and 205 each coordinate Zn(2+). CXXCXGXG motif repeat units follow at residues 149–156, 166–173, 188–195, and 202–209; these read CGVCHGSG, CPTCHGQG, CPKCHGTG, and CVHCHGSG.

The protein belongs to the DnaJ family. In terms of assembly, homodimer. The cofactor is Zn(2+).

The protein localises to the cytoplasm. Participates actively in the response to hyperosmotic and heat shock by preventing the aggregation of stress-denatured proteins and by disaggregating proteins, also in an autonomous, DnaK-independent fashion. Unfolded proteins bind initially to DnaJ; upon interaction with the DnaJ-bound protein, DnaK hydrolyzes its bound ATP, resulting in the formation of a stable complex. GrpE releases ADP from DnaK; ATP binding to DnaK triggers the release of the substrate protein, thus completing the reaction cycle. Several rounds of ATP-dependent interactions between DnaJ, DnaK and GrpE are required for fully efficient folding. Also involved, together with DnaK and GrpE, in the DNA replication of plasmids through activation of initiation proteins. This is Chaperone protein DnaJ from Burkholderia pseudomallei (strain 1710b).